We begin with the raw amino-acid sequence, 93 residues long: MGRSLKKGPFVDAKLLLKVEKMNERNEKHLIKTWSRASTILPVMIGHTIAVHNGKQHVPIYITDQMVGHKLGEFVPTRTFRGHAGSDKKAARR.

Belongs to the universal ribosomal protein uS19 family.

In terms of biological role, protein S19 forms a complex with S13 that binds strongly to the 16S ribosomal RNA. The sequence is that of Small ribosomal subunit protein uS19 from Synechococcus sp. (strain JA-2-3B'a(2-13)) (Cyanobacteria bacterium Yellowstone B-Prime).